A 546-amino-acid polypeptide reads, in one-letter code: Chaperonin GroEL (546 aa).

Residues 29–32 (TMGP), Lys-50, 86–90 (DGTTT), Gly-414, and Asp-492 each bind ATP.

The protein belongs to the chaperonin (HSP60) family. Forms a cylinder of 14 subunits composed of two heptameric rings stacked back-to-back. Interacts with the co-chaperonin GroES.

The protein resides in the cytoplasm. The catalysed reaction is ATP + H2O + a folded polypeptide = ADP + phosphate + an unfolded polypeptide.. In terms of biological role, together with its co-chaperonin GroES, plays an essential role in assisting protein folding. The GroEL-GroES system forms a nano-cage that allows encapsulation of the non-native substrate proteins and provides a physical environment optimized to promote and accelerate protein folding. The polypeptide is Chaperonin GroEL (Helicobacter pylori (strain ATCC 700392 / 26695) (Campylobacter pylori)).